The sequence spans 221 residues: Germin-like protein 8-2 (221 aa).

The signal sequence occupies residues 1–24 (MASSSFSFLLVAALLGLASWKAIA). Cysteine 34 and cysteine 49 are oxidised to a cystine. Asparagine 54 and asparagine 79 each carry an N-linked (GlcNAc...) asparagine glycan. The region spanning 64-215 (AMLDKPRDTN…AFQVDKKIID (152 aa)) is the Cupin type-1 domain. Histidine 112, histidine 114, glutamate 119, and histidine 160 together coordinate Mn(2+).

Belongs to the germin family. Oligomer (believed to be a pentamer but probably hexamer).

The protein localises to the secreted. The protein resides in the extracellular space. Its subcellular location is the apoplast. Functionally, plays a role in broad-spectrum disease resistance. Probably has no oxalate oxidase activity even if the active site is conserved. This is Germin-like protein 8-2 (GER3) from Oryza sativa subsp. japonica (Rice).